A 523-amino-acid polypeptide reads, in one-letter code: 2-isopropylmalate synthase (523 aa).

Residues 5–267 (VIIFDTTLRD…HTNINHHEIW (263 aa)) enclose the Pyruvate carboxyltransferase domain. Positions 14, 202, 204, and 238 each coordinate Mn(2+). The interval 392 to 523 (RLDYFSVQSG…HNKENNKEIV (132 aa)) is regulatory domain.

The protein belongs to the alpha-IPM synthase/homocitrate synthase family. LeuA type 1 subfamily. Homodimer. The cofactor is Mn(2+).

Its subcellular location is the cytoplasm. The enzyme catalyses 3-methyl-2-oxobutanoate + acetyl-CoA + H2O = (2S)-2-isopropylmalate + CoA + H(+). Its pathway is amino-acid biosynthesis; L-leucine biosynthesis; L-leucine from 3-methyl-2-oxobutanoate: step 1/4. Functionally, catalyzes the condensation of the acetyl group of acetyl-CoA with 3-methyl-2-oxobutanoate (2-ketoisovalerate) to form 3-carboxy-3-hydroxy-4-methylpentanoate (2-isopropylmalate). This Salmonella arizonae (strain ATCC BAA-731 / CDC346-86 / RSK2980) protein is 2-isopropylmalate synthase.